A 70-amino-acid chain; its full sequence is MKEGIHPDYHEITAKCSCGHVFVTRSTGKDLNLDVCSECHPFYTGKQKVLDTGGRIDRFKKRFAVLGGKN.

Zn(2+) is bound by residues cysteine 16, cysteine 18, cysteine 36, and cysteine 39.

The protein belongs to the bacterial ribosomal protein bL31 family. Type A subfamily. Part of the 50S ribosomal subunit. Zn(2+) is required as a cofactor.

In terms of biological role, binds the 23S rRNA. The polypeptide is Large ribosomal subunit protein bL31 (Tolumonas auensis (strain DSM 9187 / NBRC 110442 / TA 4)).